Consider the following 181-residue polypeptide: MARSAPLDETNSGAAKAPAISREQYRDAMARLGAAVTIVTTDGPGGRAGFTASAVCSVTDSPPTLLVCLNKSSSAAHAVHANGVVCVNTLAAGHEALSNLFGGRTPPEERFAAGQWHTSATGAPILVGAVVAFDCRIVKTVEVGTHDVLFCEVVGLAEGGGREGLIYFSRRYHAVAGTPEG.

Belongs to the non-flavoprotein flavin reductase family. RutF subfamily.

It carries out the reaction FMNH2 + NAD(+) = FMN + NADH + 2 H(+). Catalyzes the reduction of FMN to FMNH2 which is used to reduce pyrimidine by RutA via the Rut pathway. This is FMN reductase (NADH) RutF from Ancylobacter novellus (strain ATCC 8093 / DSM 506 / JCM 20403 / CCM 1077 / IAM 12100 / NBRC 12443 / NCIMB 10456) (Starkeya novella).